Reading from the N-terminus, the 165-residue chain is 3-isopropylmalate dehydratase small subunit (165 aa).

It belongs to the LeuD family. LeuD type 2 subfamily. Heterodimer of LeuC and LeuD.

It catalyses the reaction (2R,3S)-3-isopropylmalate = (2S)-2-isopropylmalate. The protein operates within amino-acid biosynthesis; L-leucine biosynthesis; L-leucine from 3-methyl-2-oxobutanoate: step 2/4. Functionally, catalyzes the isomerization between 2-isopropylmalate and 3-isopropylmalate, via the formation of 2-isopropylmaleate. The protein is 3-isopropylmalate dehydratase small subunit of Saccharolobus islandicus (strain M.16.27) (Sulfolobus islandicus).